The chain runs to 284 residues: Urease accessory protein UreD (284 aa).

It belongs to the UreD family. In terms of assembly, ureD, UreF and UreG form a complex that acts as a GTP-hydrolysis-dependent molecular chaperone, activating the urease apoprotein by helping to assemble the nickel containing metallocenter of UreC. The UreE protein probably delivers the nickel.

Its subcellular location is the cytoplasm. Its function is as follows. Required for maturation of urease via the functional incorporation of the urease nickel metallocenter. In Bordetella bronchiseptica (strain ATCC BAA-588 / NCTC 13252 / RB50) (Alcaligenes bronchisepticus), this protein is Urease accessory protein UreD.